We begin with the raw amino-acid sequence, 330 residues long: Glycerol-3-phosphate dehydrogenase [NAD(P)+] (330 aa).

Positions 11, 33, and 105 each coordinate NADPH. 3 residues coordinate sn-glycerol 3-phosphate: Lys-105, Gly-133, and Ser-135. Ala-137 contacts NADPH. Lys-188, Asp-241, Ser-251, Arg-252, and Asn-253 together coordinate sn-glycerol 3-phosphate. Lys-188 (proton acceptor) is an active-site residue. Residue Arg-252 coordinates NADPH. 2 residues coordinate NADPH: Val-276 and Glu-278.

Belongs to the NAD-dependent glycerol-3-phosphate dehydrogenase family.

It is found in the cytoplasm. It carries out the reaction sn-glycerol 3-phosphate + NAD(+) = dihydroxyacetone phosphate + NADH + H(+). The catalysed reaction is sn-glycerol 3-phosphate + NADP(+) = dihydroxyacetone phosphate + NADPH + H(+). Its pathway is membrane lipid metabolism; glycerophospholipid metabolism. Its function is as follows. Catalyzes the reduction of the glycolytic intermediate dihydroxyacetone phosphate (DHAP) to sn-glycerol 3-phosphate (G3P), the key precursor for phospholipid synthesis. This chain is Glycerol-3-phosphate dehydrogenase [NAD(P)+], found in Acidovorax ebreus (strain TPSY) (Diaphorobacter sp. (strain TPSY)).